We begin with the raw amino-acid sequence, 327 residues long: GMP reductase (327 aa).

Cys-176 (thioimidate intermediate) is an active-site residue. 205 to 228 (IIADGGIRTHGDIAKSIRFGASMV) is an NADP(+) binding site.

It belongs to the IMPDH/GMPR family. GuaC type 2 subfamily.

It carries out the reaction IMP + NH4(+) + NADP(+) = GMP + NADPH + 2 H(+). Functionally, catalyzes the irreversible NADPH-dependent deamination of GMP to IMP. It functions in the conversion of nucleobase, nucleoside and nucleotide derivatives of G to A nucleotides, and in maintaining the intracellular balance of A and G nucleotides. This chain is GMP reductase, found in Streptococcus pyogenes serotype M49 (strain NZ131).